Reading from the N-terminus, the 86-residue chain is Splicing factor 3B subunit 5 (86 aa).

Thr-2 bears the N-acetylthreonine mark. The residue at position 9 (Ser-9) is a Phosphoserine. Residues 15 to 76 (QSKYIGTGHA…NLMEKMLQPC (62 aa)) form an interaction with SF3B1 and SF3B3 region. At Lys-17 the chain carries N6-acetyllysine.

This sequence belongs to the SF3B5 family. As to quaternary structure, component of the 17S U2 SnRNP complex, a ribonucleoprotein complex that contains small nuclear RNA (snRNA) U2 and a number of specific proteins. Part of the SF3B subcomplex of the 17S U2 SnRNP complex. SF3B associates with the splicing subcomplex SF3A and a 12S RNA unit to form the U2 small nuclear ribonucleoproteins complex (U2 snRNP). Within the SF3B subcomplex, interacts directly with SF3B1 (via HEAT domain) and SF3B3. Component of the minor spliceosome, which splices U12-type introns.

It localises to the nucleus. Functionally, component of the 17S U2 SnRNP complex of the spliceosome, a large ribonucleoprotein complex that removes introns from transcribed pre-mRNAs. The 17S U2 SnRNP complex (1) directly participates in early spliceosome assembly and (2) mediates recognition of the intron branch site during pre-mRNA splicing by promoting the selection of the pre-mRNA branch-site adenosine, the nucleophile for the first step of splicing. Within the 17S U2 SnRNP complex, SF3B4 is part of the SF3B subcomplex, which is required for 'A' complex assembly formed by the stable binding of U2 snRNP to the branchpoint sequence in pre-mRNA. Sequence independent binding of SF3A and SF3B subcomplexes upstream of the branch site is essential, it may anchor U2 snRNP to the pre-mRNA. Also acts as a component of the minor spliceosome, which is involved in the splicing of U12-type introns in pre-mRNAs. The chain is Splicing factor 3B subunit 5 (SF3B5) from Bos taurus (Bovine).